The sequence spans 1723 residues: Lymphocyte antigen 75 (1723 aa).

The signal sequence occupies residues 1–27 (MRTGRVTPGLAAGLLLLLLRSFGLVEP). The Extracellular segment spans residues 28 to 1667 (SESSGNDPFT…AVCKIPLSPD (1640 aa)). One can recognise a Ricin B-type lectin domain in the interval 33–182 (NDPFTIVHEN…FLIGETWYHD (150 aa)). Residue Asn-135 is glycosylated (N-linked (GlcNAc...) asparagine). The region spanning 164–211 (SYGRPCEFPFLIGETWYHDCIHDEDHSGPWCATTLSYEYDQKWGICLL) is the Fibronectin type-II domain. 4 disulfides stabilise this stretch: Cys-169-Cys-194, Cys-183-Cys-209, Cys-247-Cys-340, and Cys-317-Cys-332. A C-type lectin 1 domain is found at 225-341 (QIGSCYQFNN…CESQQPYVCK (117 aa)). N-linked (GlcNAc...) asparagine glycans are attached at residues Asn-345 and Asn-377. C-type lectin domains follow at residues 368 to 486 (NNGF…YVCK), 493 to 625 (KDAE…ICKK), and 652 to 791 (SSLS…WVCQ). 2 disulfide bridges follow: Cys-389-Cys-485 and Cys-462-Cys-477. N-linked (GlcNAc...) asparagine glycosylation occurs at Asn-529. 3 disulfide bridges follow: Cys-597–Cys-614, Cys-678–Cys-790, and Cys-752–Cys-782. N-linked (GlcNAc...) asparagine glycans are attached at residues Asn-843 and Asn-865. Tyr-934 is subject to Phosphotyrosine. Asn-935, Asn-1077, and Asn-1104 each carry an N-linked (GlcNAc...) asparagine glycan. The C-type lectin 5 domain occupies 959 to 1092 (FQNKCFLKVN…ERHSLSLCQK (134 aa)). Cys-1061 and Cys-1081 are oxidised to a cystine. The C-type lectin 6 domain occupies 1111–1223 (YLNNLYKIIS…DNQPGAICYY (113 aa)). Cys-1198 and Cys-1212 are joined by a disulfide. 3 N-linked (GlcNAc...) asparagine glycosylation sites follow: Asn-1226, Asn-1321, and Asn-1393. The 124-residue stretch at 1252–1375 (FQNSCYNFMI…VIEETLHFYQ (124 aa)) folds into the C-type lectin 7 domain. C-type lectin domains follow at residues 1402-1514 (YKDG…ICYK) and 1543-1662 (YGGH…VCKI). Cys-1489 and Cys-1503 are oxidised to a cystine. Asn-1594 and Asn-1627 each carry an N-linked (GlcNAc...) asparagine glycan. A disulfide bridge links Cys-1636 with Cys-1651. The chain crosses the membrane as a helical span at residues 1668-1692 (YTGIAILFAVLCLLGLISLAIWFLL). Over 1693-1723 (QRSHIRWTGFSSVRYEHGTNEDEVMLPSFHD) the chain is Cytoplasmic. Phosphoserine occurs at positions 1704 and 1720.

In terms of processing, N-glycosylated. Expressed in dendritic and thymic epithelial cells and lymph nodes.

Its subcellular location is the membrane. Functionally, acts as an endocytic receptor to direct captured antigens from the extracellular space to a specialized antigen-processing compartment. Causes reduced proliferation of B lymphocytes. This chain is Lymphocyte antigen 75 (Ly75), found in Mus musculus (Mouse).